A 397-amino-acid polypeptide reads, in one-letter code: Aspartate/prephenate aminotransferase (397 aa).

Residues Gly38, Trp124, and Asn174 each contribute to the L-aspartate site. Lys238 carries the N6-(pyridoxal phosphate)lysine modification. L-aspartate is bound at residue Arg375.

The protein belongs to the class-I pyridoxal-phosphate-dependent aminotransferase family. Homodimer. Pyridoxal 5'-phosphate serves as cofactor.

It localises to the cytoplasm. It catalyses the reaction L-aspartate + 2-oxoglutarate = oxaloacetate + L-glutamate. It carries out the reaction L-arogenate + 2-oxoglutarate = prephenate + L-glutamate. In terms of biological role, catalyzes the reversible conversion of aspartate and 2-oxoglutarate to glutamate and oxaloacetate. Can also transaminate prephenate in the presence of glutamate, with lower efficiency. The sequence is that of Aspartate/prephenate aminotransferase from Nitrosomonas europaea (strain ATCC 19718 / CIP 103999 / KCTC 2705 / NBRC 14298).